Consider the following 495-residue polypeptide: MLAYPTTSSPWPPRHHGAAAAPAARRHMAAAAARGKRRGAGAAAAEGADEAAEAADLVRFFLRRTSGGKERLVAVLDRHVKVVRTEHCFLLFEELGRRDGWLQCLEVFRWMQKQRWYVADNGIYSKLISVMGRKGQIRMAMWLFSQMRNSGCRPDTSVYNSLIGTHLHSRDKSKALAKALGYFEKMKTIDRCQPNIVTYNILLRAFAQAGDTKQLDILFKDLDESPVSPDIYTYNGVMDAYGKNGMITEMESVLVRMKSNQCRPDVITFNILIDSYGRKQAFDKMEQVFKSLLRSKEKPTHPTFNSMITNYGKARLREKAECVLDKMTEMGFKPNYVTQECLIMMYAYCDCVSRARQIFDELVSSQNNVHLSSVNAMLDAYCMNGLPMEADQLLDSVIKKGAVPSASTYKLLYKAYTKANDKKLIQKLLKRMNSQGIVPNKKFFLDALEAFGNTDKKPRTVPSKNSASKPDVESANNSGTDTSSKPNLSVWQVAA.

The tract at residues 1–24 is disordered; the sequence is MLAYPTTSSPWPPRHHGAAAAPAA. Residues 1–29 constitute a chloroplast transit peptide; sequence MLAYPTTSSPWPPRHHGAAAAPAARRHMA. PPR repeat units lie at residues 120–154, 155–189, 195–229, 230–264, 265–299, 300–334, 335–365, 370–404, and 405–439; these read DNGI…GCRP, DTSV…MKTI, NIVT…PVSP, DIYT…QCRP, DVIT…KEKP, THPT…GFKP, NYVT…LVSS, HLSS…GAVP, and SAST…GIVP. Residues 455-495 form a disordered region; sequence DKKPRTVPSKNSASKPDVESANNSGTDTSSKPNLSVWQVAA. Over residues 462 to 495 the composition is skewed to polar residues; that stretch reads PSKNSASKPDVESANNSGTDTSSKPNLSVWQVAA.

It belongs to the PPR family. P subfamily.

The protein localises to the plastid. Its subcellular location is the chloroplast. Functionally, involved in the biogenesis of the plastid translation machinery by promoting the splicing of group II introns in chloroplasts. This Oryza sativa subsp. japonica (Rice) protein is Pentatricopeptide repeat-containing protein PPR5 homolog, chloroplastic.